Reading from the N-terminus, the 336-residue chain is Succinylglutamate desuccinylase (336 aa).

3 residues coordinate Zn(2+): H59, E62, and H151. The active site involves E215.

Belongs to the AspA/AstE family. Succinylglutamate desuccinylase subfamily. Zn(2+) is required as a cofactor.

The enzyme catalyses N-succinyl-L-glutamate + H2O = L-glutamate + succinate. It participates in amino-acid degradation; L-arginine degradation via AST pathway; L-glutamate and succinate from L-arginine: step 5/5. Its function is as follows. Transforms N(2)-succinylglutamate into succinate and glutamate. This chain is Succinylglutamate desuccinylase, found in Pseudomonas fluorescens (strain ATCC BAA-477 / NRRL B-23932 / Pf-5).